Consider the following 570-residue polypeptide: MNRDQALLNRLWSRVLLEELSRLGVTQVCVAPGSRSTPLTLEANANTAFTLHTHYDERGLGFMALGLAKASQQPVAVIVTSGTAVANLLPAIAESKLTGERLVVLTADRPLELVGCGANQAIVQSGIFSSHVTASLELPSPAIHHPLSWLLTSIDEVMARQALLGGSVHINCPFPEPLYSAGDEAIYQPYLQPVQRWREQARPYTQVHQGLVQSVPAAIDGLLTKGVVIVGSLSLQEAQAAKRFAKAMGWPLLCDPQSGISSQWAHFDLWLQHPKAREQLNQAQCVVQFGSRIVSKRLLQWLEAWCATGLGEYHYIAPHSARNNPWHAMQQQWVCEISHWVDAVLSKRLAGQHTQQGWADELTHYAQSVRQLAQLHFSSSSLSEVALALDLTERATQADLFLGNSLIVRLVDIFSALDGREVFSNRGASGIDGLVATASGVQRARQKPLLMLLGDTSLLYDLNSLALMRNPAQPTVIVVTNNDGGAIFDLLPVPSEQREALYQMPHGMDFAHAASQFGLAYCAAQTLEHYQTLVEEHFAHGAGTLLIEVKTPPQQASMHIKQLTSQLHAL.

Belongs to the TPP enzyme family. MenD subfamily. In terms of assembly, homodimer. Requires Mg(2+) as cofactor. It depends on Mn(2+) as a cofactor. The cofactor is thiamine diphosphate.

It carries out the reaction isochorismate + 2-oxoglutarate + H(+) = 5-enolpyruvoyl-6-hydroxy-2-succinyl-cyclohex-3-ene-1-carboxylate + CO2. It participates in quinol/quinone metabolism; 1,4-dihydroxy-2-naphthoate biosynthesis; 1,4-dihydroxy-2-naphthoate from chorismate: step 2/7. The protein operates within quinol/quinone metabolism; menaquinone biosynthesis. Functionally, catalyzes the thiamine diphosphate-dependent decarboxylation of 2-oxoglutarate and the subsequent addition of the resulting succinic semialdehyde-thiamine pyrophosphate anion to isochorismate to yield 2-succinyl-5-enolpyruvyl-6-hydroxy-3-cyclohexene-1-carboxylate (SEPHCHC). The polypeptide is 2-succinyl-5-enolpyruvyl-6-hydroxy-3-cyclohexene-1-carboxylate synthase (Vibrio cholerae serotype O1 (strain ATCC 39541 / Classical Ogawa 395 / O395)).